The sequence spans 542 residues: Chaperonin GroEL 3 (542 aa).

ATP-binding positions include 30 to 33 (TLGP), Lys-51, 87 to 91 (DGTTT), Gly-415, and Asp-496.

It belongs to the chaperonin (HSP60) family. Forms a cylinder of 14 subunits composed of two heptameric rings stacked back-to-back. Interacts with the co-chaperonin GroES.

Its subcellular location is the cytoplasm. The enzyme catalyses ATP + H2O + a folded polypeptide = ADP + phosphate + an unfolded polypeptide.. Together with its co-chaperonin GroES, plays an essential role in assisting protein folding. The GroEL-GroES system forms a nano-cage that allows encapsulation of the non-native substrate proteins and provides a physical environment optimized to promote and accelerate protein folding. This chain is Chaperonin GroEL 3, found in Rhizobium johnstonii (strain DSM 114642 / LMG 32736 / 3841) (Rhizobium leguminosarum bv. viciae).